Here is a 267-residue protein sequence, read N- to C-terminus: Apolipoprotein A-I (267 aa).

Positions 1–18 are cleaved as a signal peptide; it reads MKAAVLTLAVLFLTGSQA. Tandem repeats lie at residues 68–89 and 90–111. Residues 68-267 form a 10 X approximate tandem repeats region; it reads LKLLDNWDSL…EEYAKKLSSQ (200 aa). Residue Met110 is modified to Methionine sulfoxide. A 3; half-length repeat occupies 112–122; it reads KDLEEVKAKVQ. 5 consecutive repeat copies span residues 123 to 144, 145 to 166, 167 to 188, 189 to 210, and 211 to 232. The stretch at 233 to 243 is one 9; half-length repeat; that stretch reads PALEDLRQGLL. Residues 244 to 267 form repeat 10; sequence PVLESFKVSFLSALEEYAKKLSSQ.

The protein belongs to the apolipoprotein A1/A4/E family. In terms of assembly, homodimer. Interacts with APOA1BP and CLU. Component of a sperm activating protein complex (SPAP), consisting of APOA1, an immunoglobulin heavy chain, an immunoglobulin light chain and albumin. Interacts with NDRG1. Interacts with SCGB3A2. Interacts with NAXE and YJEFN3. Glycosylated. Post-translationally, palmitoylated. In terms of processing, phosphorylation sites are present in the extracellular medium.

The protein localises to the secreted. Participates in the reverse transport of cholesterol from tissues to the liver for excretion by promoting cholesterol efflux from tissues and by acting as a cofactor for the lecithin cholesterol acyltransferase (LCAT). As part of the SPAP complex, activates spermatozoa motility. The sequence is that of Apolipoprotein A-I (APOA1) from Cebus imitator (Panamanian white-faced capuchin).